We begin with the raw amino-acid sequence, 833 residues long: EF-hand domain-containing family member B (833 aa).

EF-hand domains lie at 561 to 596 (QKFD…ANLS) and 597 to 632 (LDDK…KDKM). Ca(2+) contacts are provided by Asp574, Asp578, Met580, Glu585, Asp610, Asp612, Asp614, and Glu621.

In terms of assembly, microtubule inner protein component of sperm flagellar doublet microtubules. Interacts with STIM1 and ORAI1; the interactions take place upon Ca(2+)-store depletion and dissociate through a Ca(2+)-dependent mechanism. Interaction with STIM1 inhibits STIM1 interaction with SARAF. As to expression, expressed in airway epithelial cells.

The protein resides in the cytoplasm. The protein localises to the cytoskeleton. It is found in the cilium axoneme. Its subcellular location is the flagellum axoneme. Its function is as follows. Microtubule inner protein (MIP) part of the dynein-decorated doublet microtubules (DMTs) in cilia axoneme, which is required for motile cilia beating. Cytosolic sensor for calcium, modulates the interaction of STIM1 and ORAI1 upon store depletion and the activation of store-operated Ca(2+) entry (SOCE) and NFAT translocation from cytosol to nucleus. The polypeptide is EF-hand domain-containing family member B (Homo sapiens (Human)).